We begin with the raw amino-acid sequence, 268 residues long: Putative hydro-lyase PSPTO_5379 (268 aa).

It belongs to the D-glutamate cyclase family.

The chain is Putative hydro-lyase PSPTO_5379 from Pseudomonas syringae pv. tomato (strain ATCC BAA-871 / DC3000).